The chain runs to 456 residues: Bifunctional protein GlmU (456 aa).

The segment at 1 to 230 (MDKRFAVVLA…FQETLGVNDR (230 aa)) is pyrophosphorylase. UDP-N-acetyl-alpha-D-glucosamine-binding positions include 9–12 (LAAG), Lys-23, Gln-73, and 78–79 (GT). Asp-103 is a binding site for Mg(2+). 4 residues coordinate UDP-N-acetyl-alpha-D-glucosamine: Gly-140, Glu-155, Asn-170, and Asn-228. A Mg(2+)-binding site is contributed by Asn-228. The linker stretch occupies residues 231–251 (VALSQAEIYMKQRINKRHMQN). The interval 252-456 (GVSLIDPDNT…EDYAENIHKK (205 aa)) is N-acetyltransferase. 2 residues coordinate UDP-N-acetyl-alpha-D-glucosamine: Arg-333 and Lys-351. His-363 functions as the Proton acceptor in the catalytic mechanism. The UDP-N-acetyl-alpha-D-glucosamine site is built by Tyr-366 and Asn-377. Residues 386-387 (NY), Ala-423, and Arg-440 contribute to the acetyl-CoA site.

The protein in the N-terminal section; belongs to the N-acetylglucosamine-1-phosphate uridyltransferase family. In the C-terminal section; belongs to the transferase hexapeptide repeat family. As to quaternary structure, homotrimer. It depends on Mg(2+) as a cofactor.

The protein resides in the cytoplasm. It carries out the reaction alpha-D-glucosamine 1-phosphate + acetyl-CoA = N-acetyl-alpha-D-glucosamine 1-phosphate + CoA + H(+). It catalyses the reaction N-acetyl-alpha-D-glucosamine 1-phosphate + UTP + H(+) = UDP-N-acetyl-alpha-D-glucosamine + diphosphate. It functions in the pathway nucleotide-sugar biosynthesis; UDP-N-acetyl-alpha-D-glucosamine biosynthesis; N-acetyl-alpha-D-glucosamine 1-phosphate from alpha-D-glucosamine 6-phosphate (route II): step 2/2. It participates in nucleotide-sugar biosynthesis; UDP-N-acetyl-alpha-D-glucosamine biosynthesis; UDP-N-acetyl-alpha-D-glucosamine from N-acetyl-alpha-D-glucosamine 1-phosphate: step 1/1. The protein operates within bacterial outer membrane biogenesis; LPS lipid A biosynthesis. Functionally, catalyzes the last two sequential reactions in the de novo biosynthetic pathway for UDP-N-acetylglucosamine (UDP-GlcNAc). The C-terminal domain catalyzes the transfer of acetyl group from acetyl coenzyme A to glucosamine-1-phosphate (GlcN-1-P) to produce N-acetylglucosamine-1-phosphate (GlcNAc-1-P), which is converted into UDP-GlcNAc by the transfer of uridine 5-monophosphate (from uridine 5-triphosphate), a reaction catalyzed by the N-terminal domain. This chain is Bifunctional protein GlmU, found in Bacillus licheniformis (strain ATCC 14580 / DSM 13 / JCM 2505 / CCUG 7422 / NBRC 12200 / NCIMB 9375 / NCTC 10341 / NRRL NRS-1264 / Gibson 46).